Reading from the N-terminus, the 167-residue chain is Translation initiation factor IF-3 (167 aa).

The protein belongs to the IF-3 family. As to quaternary structure, monomer.

The protein resides in the cytoplasm. IF-3 binds to the 30S ribosomal subunit and shifts the equilibrium between 70S ribosomes and their 50S and 30S subunits in favor of the free subunits, thus enhancing the availability of 30S subunits on which protein synthesis initiation begins. The chain is Translation initiation factor IF-3 from Bacillus anthracis.